The following is a 218-amino-acid chain: MENDCTVNIVSLEKDRDVSEASAESQSESTLSNSLDSGVTAETSRSDADSKLDECTAWTNEKHNSYLDYLESSFVRQLYSLLGGGTQRLSRTRDVQSNSHKSADQFTVLQNGCWQKVNFGKKQSCLETSSEFRFHRNSLRNKPENSNGNYTMGTTVQGDVLCHDETKHSEASGQNFREEEEEEEKGEVSKKREREANNDDSSLKEDQVVPVRMVKPRT.

Disordered regions lie at residues 1-51 (MEND…ADSK) and 166-218 (TKHS…KPRT). A compositionally biased stretch (low complexity) spans 20-37 (EASAESQSESTLSNSLDS). Basic and acidic residues predominate over residues 186–207 (GEVSKKREREANNDDSSLKEDQ).

The protein resides in the nucleus. Functionally, together with COR27, involved in central circadian clock regulation and in flowering promotion, by binding to the chromatin of clock-associated evening genes TOC1, PRR5, ELF4 and cold-responsive genes in order to repress their transcription. Negative regulator of freezing tolerance. In Arabidopsis thaliana (Mouse-ear cress), this protein is Cold-regulated protein 28.